The chain runs to 537 residues: Copine-1 (537 aa).

C2 domains lie at 1–114 (MAHC…TLPL) and 123–245 (GRGT…ECIH). Positions 21, 27, 80, 82, 92, 153, and 159 each coordinate Ca(2+). N6-acetyllysine is present on Lys-171. Residues Asp-214, Asp-216, and Asp-222 each contribute to the Ca(2+) site. The region spanning 285 to 505 (NFTVGVDFTG…ALAQTVLAEV (221 aa)) is the VWFA domain.

It belongs to the copine family. In terms of assembly, homodimer; homodimerizes via its C2 domains. Interacts with p65/RELA (via N-terminus); this interaction induces proteolytic cleavage of p65/RELA subunit and inhibition of NF-kappa-B transcriptional activity. Interacts (via VWFA domain) with ACTB, CCDC22, MYCBP2, PPP5C, RDX and UBE2O. Ca(2+) serves as cofactor. Expressed in liver, spleen, muscle, testis, adrenal (at protein level).

It localises to the nucleus. The protein localises to the cytoplasm. The protein resides in the cell membrane. In terms of biological role, calcium-dependent phospholipid-binding protein that plays a role in calcium-mediated intracellular processes. Involved in the TNF-alpha receptor signaling pathway in a calcium-dependent manner. Exhibits calcium-dependent phospholipid binding properties. Plays a role in neuronal progenitor cell differentiation; induces neurite outgrowth via a AKT-dependent signaling cascade and calcium-independent manner. May recruit target proteins to the cell membrane in a calcium-dependent manner. May function in membrane trafficking. Involved in TNF-alpha-induced NF-kappa-B transcriptional repression by inducing endoprotease processing of the transcription factor NF-kappa-B p65/RELA subunit. Also induces endoprotease processing of NF-kappa-B p50/NFKB1, p52/NFKB2, RELB and REL. This chain is Copine-1, found in Bos taurus (Bovine).